The following is a 120-amino-acid chain: MFYWILLALAIATEITGTLSMKWASVGNGNAGFILMLVMITLSYIFLSFAVKKIALGVAYALWEGIGILFITIFSVLLFDEALSTMKIAGLLTLVAGIVLIKSGTRKPGKPVKEATRATI.

Transmembrane regions (helical) follow at residues 1-21 (MFYW…TLSM), 31-51 (AGFI…SFAV), 54-74 (IALG…ITIF), and 81-101 (EALS…IVLI).

This sequence belongs to the drug/metabolite transporter (DMT) superfamily. Small multidrug resistance (SMR) (TC 2.A.7.1) family. MdtJ subfamily. As to quaternary structure, forms a complex with MdtI.

The protein localises to the cell inner membrane. Its function is as follows. Catalyzes the excretion of spermidine. This Salmonella choleraesuis (strain SC-B67) protein is Spermidine export protein MdtJ.